Here is a 376-residue protein sequence, read N- to C-terminus: Dihydroorotate dehydrogenase (quinone) (376 aa).

FMN is bound by residues A74–K78 and T98. K78 provides a ligand contact to substrate. N123 to F127 is a substrate binding site. FMN is bound by residues N155 and N188. A substrate-binding site is contributed by N188. Catalysis depends on S191, which acts as the Nucleophile. Substrate is bound at residue N193. FMN-binding residues include K226 and T254. Residue N255–T256 participates in substrate binding. FMN is bound by residues G284, G313, and Y334–T335.

It belongs to the dihydroorotate dehydrogenase family. Type 2 subfamily. Monomer. FMN is required as a cofactor.

It is found in the cell membrane. The enzyme catalyses (S)-dihydroorotate + a quinone = orotate + a quinol. Its pathway is pyrimidine metabolism; UMP biosynthesis via de novo pathway; orotate from (S)-dihydroorotate (quinone route): step 1/1. Functionally, catalyzes the conversion of dihydroorotate to orotate with quinone as electron acceptor. The sequence is that of Dihydroorotate dehydrogenase (quinone) from Nostoc punctiforme (strain ATCC 29133 / PCC 73102).